The following is a 72-amino-acid chain: Translation initiation factor IF-1 (72 aa).

The 72-residue stretch at 1-72 (MAKEDAIELQ…SKGRIVFRAR (72 aa)) folds into the S1-like domain.

Belongs to the IF-1 family. Component of the 30S ribosomal translation pre-initiation complex which assembles on the 30S ribosome in the order IF-2 and IF-3, IF-1 and N-formylmethionyl-tRNA(fMet); mRNA recruitment can occur at any time during PIC assembly.

The protein resides in the cytoplasm. Functionally, one of the essential components for the initiation of protein synthesis. Stabilizes the binding of IF-2 and IF-3 on the 30S subunit to which N-formylmethionyl-tRNA(fMet) subsequently binds. Helps modulate mRNA selection, yielding the 30S pre-initiation complex (PIC). Upon addition of the 50S ribosomal subunit IF-1, IF-2 and IF-3 are released leaving the mature 70S translation initiation complex. The polypeptide is Translation initiation factor IF-1 (Aliivibrio fischeri (strain ATCC 700601 / ES114) (Vibrio fischeri)).